Consider the following 486-residue polypeptide: Protein kinase C and casein kinase substrate in neurons protein 2 (486 aa).

The region spanning 11–282 (VEVSSDSFWE…SIKAADAVED (272 aa)) is the F-BAR domain. Positions 25 to 274 (KRTVKRIDDG…TIYRELEQSI (250 aa)) form a coiled coil. Lysine 53 carries the N6-acetyllysine modification. Serine 273 carries the post-translational modification Phosphoserine. The residue at position 313 (serine 313) is a Phosphoserine; by PKC. The tract at residues 315–426 (REKKKAVDGV…NPFDEDTTSG (112 aa)) is disordered. The segment covering 327-362 (TGINQTGDQSGQNKPGSNLSVPSNPAQSTQLQSSYN) has biased composition (polar residues). The NPF1 motif lies at 362 to 364 (NPF). Phosphoserine; by IKKB is present on serine 373. The segment covering 384–396 (NVSSYEKTQTYPT) has biased composition (polar residues). Residue serine 399 is modified to Phosphoserine. Polar residues predominate over residues 404–416 (NNPFSSTDANGDS). Positions 405 to 407 (NPF) match the NPF2 motif. The short motif at 417-419 (NPF) is the NPF3 element. One can recognise an SH3 domain in the interval 426–486 (GTEVRVRALY…YPANYVEAIQ (61 aa)). A Phosphoserine modification is found at serine 446.

Belongs to the PACSIN family. Homodimer. May form heterooligomers with other PACSINs. Interacts (via NPF motifs) with EHD1 (via EH domain). Interacts (via NPF motifs) with EHD2 (via EH domain); this interaction probably stabilizes the caveolae. Interacts with EHD3. Interacts (via the SH3 domain) with MICALL1. Interacts with RAC1. Interacts (via SH3 domain) with DNM1, SYN1, SYNJ1 and WASL. Interacts (via F-BAR domain) with CAV1; this interaction induces membrane tubulation. Interacts with TRPV4. Forms a complex with EHD4 and MICALL1; the complex controls CDH5 trafficking and coordinates angiogenesis. In terms of processing, phosphorylated by casein kinase 2 (CK2). Phosphorylation by PKC probably decreases the membrane binding and tubulation capacities of PACSIN2, thereby modulating the lifetime of caveolae. Widely expressed (at protein level).

Its subcellular location is the cytoplasm. It localises to the cytoskeleton. The protein localises to the cytoplasmic vesicle membrane. It is found in the cell projection. The protein resides in the ruffle membrane. Its subcellular location is the early endosome. It localises to the recycling endosome membrane. The protein localises to the cell membrane. It is found in the membrane. The protein resides in the caveola. Its subcellular location is the cell junction. It localises to the adherens junction. In terms of biological role, regulates the morphogenesis and endocytosis of caveolae. Lipid-binding protein that is able to promote the tubulation of the phosphatidic acid-containing membranes it preferentially binds. Plays a role in intracellular vesicle-mediated transport. Involved in the endocytosis of cell-surface receptors like the EGF receptor, contributing to its internalization in the absence of EGF stimulus. Essential for endothelial organization in sprouting angiogenesis, modulates CDH5-based junctions. Facilitates endothelial front-rear polarity during migration by recruiting EHD4 and MICALL1 to asymmetric adherens junctions between leader and follower cells. The sequence is that of Protein kinase C and casein kinase substrate in neurons protein 2 (Pacsin2) from Mus musculus (Mouse).